Here is a 347-residue protein sequence, read N- to C-terminus: Dihydroorotase (347 aa).

Residues His-17 and His-19 each coordinate Zn(2+). Residues 19–21 (HLR) and Asn-45 each bind substrate. Zn(2+) is bound by residues Lys-103, His-140, and His-178. An N6-carboxylysine modification is found at Lys-103. His-140 contacts substrate. Substrate is bound at residue Leu-223. Asp-251 provides a ligand contact to Zn(2+). Residue Asp-251 is part of the active site. Positions 255 and 267 each coordinate substrate.

Belongs to the metallo-dependent hydrolases superfamily. DHOase family. Class II DHOase subfamily. As to quaternary structure, homodimer. It depends on Zn(2+) as a cofactor.

The enzyme catalyses (S)-dihydroorotate + H2O = N-carbamoyl-L-aspartate + H(+). Its pathway is pyrimidine metabolism; UMP biosynthesis via de novo pathway; (S)-dihydroorotate from bicarbonate: step 3/3. In terms of biological role, catalyzes the reversible cyclization of carbamoyl aspartate to dihydroorotate. This Pectobacterium atrosepticum (strain SCRI 1043 / ATCC BAA-672) (Erwinia carotovora subsp. atroseptica) protein is Dihydroorotase.